Here is a 1476-residue protein sequence, read N- to C-terminus: SH3 and multiple ankyrin repeat domains protein 2 (1476 aa).

Polar residues predominate over residues Leu66–Ser76. The disordered stretch occupies residues Leu66–Phe134. Residues Val147 to Cys206 form the SH3 domain. Val162 bears the Phosphoserine mark. One can recognise a PDZ domain in the interval Thr247–Thr341. The residue at position 372 (Ser372) is a Phosphoserine. The disordered stretch occupies residues Arg391–Asn412. The residue at position 456 (Ser456) is a Phosphoserine. Thr485 carries the post-translational modification Phosphothreonine. The tract at residues Leu503–Cys533 is disordered. Over residues Ile512–Pro528 the composition is skewed to pro residues. The residue at position 586 (Ser586) is a Phosphoserine. Disordered stretches follow at residues Thr659–Arg916, Val946–Ala983, and Pro1057–Asp1153. Positions Ser666–Ser678 are enriched in low complexity. A compositionally biased stretch (basic and acidic residues) spans Val711 to Arg722. Phosphoserine is present on Ser724. The span at Leu783–Gly795 shows a compositional bias: gly residues. Low complexity predominate over residues Arg833 to Ser846. Basic and acidic residues-rich tracts occupy residues Ala847 to Leu868 and Arg899 to Arg916. Thr903 is subject to Phosphothreonine. Polar residues predominate over residues Thr1070–Thr1085. The span at Val1119–Glu1130 shows a compositional bias: basic and acidic residues. Over residues Thr1131–Ser1151 the composition is skewed to low complexity. An SH3-binding motif is present at residues Pro1169–Pro1175. 2 disordered regions span residues Glu1195–Ala1216 and Asn1260–Lys1403. The segment covering Ile1202–Gly1212 has biased composition (pro residues). Residues Ser1291–Val1305 are compositionally biased toward low complexity. O-linked (GlcNAc) threonine glycosylation is present at Thr1292. The segment covering Pro1307–Ser1317 has biased composition (polar residues). Residues Ser1334 and Ser1338 each carry the phosphoserine modification. Residues Leu1364–Pro1375 show a composition bias toward polar residues. Residues Arg1387–Ser1401 show a composition bias toward low complexity. In terms of domain architecture, SAM spans Trp1413–Arg1476.

The protein belongs to the SHANK family. Is part of a complex with DLG4/PSD-95 and DLGAP1/GKAP. Interacts with CTTN/cortactin SH3 domain, DLGAP1/GKAP and alpha-latrotoxin receptor 1. Interacts with DNM2, DBNL, GRID2, BAIAP2, SLC9A3, PLCB3 and CFTR. Interacts (via proline-rich region) with PDE4D. Interacts with ABI1 (via SH3 domain). As to expression, detected in brain (at protein level), where it is highly expressed in Purkinje cells.

It localises to the apical cell membrane. The protein resides in the cytoplasm. The protein localises to the synapse. It is found in the postsynaptic density. Its subcellular location is the cell projection. It localises to the dendritic spine. The protein resides in the growth cone. Its function is as follows. Seems to be an adapter protein in the postsynaptic density (PSD) of excitatory synapses that interconnects receptors of the postsynaptic membrane including NMDA-type and metabotropic glutamate receptors, and the actin-based cytoskeleton. May play a role in the structural and functional organization of the dendritic spine and synaptic junction. This Mus musculus (Mouse) protein is SH3 and multiple ankyrin repeat domains protein 2 (Shank2).